The sequence spans 100 residues: Small ribosomal subunit protein uS14c (100 aa).

Belongs to the universal ribosomal protein uS14 family. In terms of assembly, part of the 30S ribosomal subunit.

The protein resides in the plastid. Its subcellular location is the cyanelle. Functionally, binds 16S rRNA, required for the assembly of 30S particles. In Cyanophora paradoxa, this protein is Small ribosomal subunit protein uS14c.